The primary structure comprises 278 residues: MDVQGELAQGKALDVWQAAVDSGSDTHVHGGAKAEMLEGSELVVITAGVPRKPGQSRQDVLSTNLPILDSIMADIKHHAPTATVLVVSNPVDVLTYRAWSVSGQGRDKVFGQAGVLDTARMKCFIAEQTGFSARDITALVLGGHGDSMVPLMRYCQIGSVPLSHFLSSEQIEQIVERTRKGGGEILGLKKTGSACDAPGVAIAQMVDAIANGRNRILPAVAILEGEYGRTDIAMGVPCVLAEKGLARIIELPLDAQEQAMFDHSADQVARDIAEMKAL.

Substrate-binding residues include R51 and R57. Residues N64 and 87–89 each bind NAD(+); that span reads VSN. Substrate contacts are provided by N89 and R120. H144 functions as the Proton acceptor in the catalytic mechanism.

Belongs to the LDH/MDH superfamily.

The enzyme catalyses (S)-malate + NAD(+) = oxaloacetate + NADH + H(+). Catalyzes the reversible oxidation of malate to oxaloacetate. The protein is Probable malate dehydrogenase (mdh) of Pseudomonas putida (strain ATCC 47054 / DSM 6125 / CFBP 8728 / NCIMB 11950 / KT2440).